Consider the following 489-residue polypeptide: Putative general negative regulator of transcription C16C9.04c (489 aa).

An RING-type zinc finger spans residues 18 to 61; that stretch reads CPLCMEEIDISDKNFKPCQCGYRVCRFCWHHIKEDLNGRCPACR. Residues 76–109 adopt a coiled-coil conformation; it reads AEEWKMDLHRKNERKKREKERKEVELSNRKHLAN. The region spanning 116–198 is the RRM domain; the sequence is NLAYVNGLSP…VSDGRHLRAS (83 aa). Residues 199–226 form a C3H1-type zinc finger; the sequence is YGTTKYCTSYLRNQQCPNPSCMYLHEPG. Polar residues-rich tracts occupy residues 246–261 and 466–479; these read LSTK…HSPS and ENQP…NNGN. 2 disordered regions span residues 246 to 268 and 458 to 489; these read LSTK…PFKT and VPEQ…GFQS.

It is found in the nucleus. Its function is as follows. May negatively regulate the basal and activated transcription of many genes. The protein is Putative general negative regulator of transcription C16C9.04c of Schizosaccharomyces pombe (strain 972 / ATCC 24843) (Fission yeast).